The following is a 240-amino-acid chain: Ribonuclease HII (240 aa).

Residues 21-210 form the RNase H type-2 domain; it reads GLVAGVDEAG…VAAAVQRTVV (190 aa). A divalent metal cation contacts are provided by D27, E28, and D119.

Belongs to the RNase HII family. Mn(2+) is required as a cofactor. Requires Mg(2+) as cofactor.

Its subcellular location is the cytoplasm. The enzyme catalyses Endonucleolytic cleavage to 5'-phosphomonoester.. Endonuclease that specifically degrades the RNA of RNA-DNA hybrids. The protein is Ribonuclease HII of Paracidovorax citrulli (strain AAC00-1) (Acidovorax citrulli).